The chain runs to 281 residues: Pre T-cell antigen receptor alpha (281 aa).

A signal peptide spans 1–23 (MAGTWLLLLLALGCPALPTGVGG). Over 24–146 (TPFPSLAPPI…QEPLRGTPGG (123 aa)) the chain is Extracellular. A disulfide bond links Cys-47 and Cys-107. N-linked (GlcNAc...) asparagine glycosylation is present at Asn-67. The helical transmembrane segment at 147-167 (ALWLGVLRLLLFKLLLFDLLL) threads the bilayer. The Cytoplasmic portion of the chain corresponds to 168 to 281 (TCSCLCDPAG…LPPPLQAGAA (114 aa)). A disordered region spans residues 196-233 (LHPATETGGREATSSPRPQPRDRRWGDTPPGRKPGSPV).

Heterodimer with TCRB; disulfide linked. This heterodimer assembles with CD3 proteins into a signaling-competent pre-T-cell receptor complex. Interacts with RHBDD1. As to expression, expressed in immature but not mature T-cells. Also found in CD34+ cells from peripheral blood, CD34+ precursors from umbilical cord blood and adult bone marrow.

The protein localises to the membrane. Its subcellular location is the cell membrane. Functionally, component of the pre-T-cell receptor complex (composed of PTCRA, TCRB and the CD3 complex) that has a crucial role in early T-cell development, particularly alpha-beta T cell differentiation. This chain is Pre T-cell antigen receptor alpha, found in Homo sapiens (Human).